Consider the following 285-residue polypeptide: NAD kinase (285 aa).

Catalysis depends on Asp64, which acts as the Proton acceptor. Residues 64–65 (DG), 138–139 (ND), Arg149, Arg166, Asp168, Leu176, 179–184 (SGYTIS), and Gln238 each bind NAD(+).

This sequence belongs to the NAD kinase family. It depends on a divalent metal cation as a cofactor.

Its subcellular location is the cytoplasm. It catalyses the reaction NAD(+) + ATP = ADP + NADP(+) + H(+). In terms of biological role, involved in the regulation of the intracellular balance of NAD and NADP, and is a key enzyme in the biosynthesis of NADP. Catalyzes specifically the phosphorylation on 2'-hydroxyl of the adenosine moiety of NAD to yield NADP. This chain is NAD kinase, found in Lawsonia intracellularis (strain PHE/MN1-00).